Here is a 198-residue protein sequence, read N- to C-terminus: Probable GTP-binding protein EngB (198 aa).

An EngB-type G domain is found at 21–195 (NFSEVAFLGR…EDIIINQTLG (175 aa)). Residues 29–36 (GRSNVGKS), 56–60 (GKTQL), 81–84 (DLPG), 151–154 (TKCD), and 174–176 (VSN) each bind GTP. Mg(2+) contacts are provided by S36 and T58.

The protein belongs to the TRAFAC class TrmE-Era-EngA-EngB-Septin-like GTPase superfamily. EngB GTPase family. The cofactor is Mg(2+).

In terms of biological role, necessary for normal cell division and for the maintenance of normal septation. This is Probable GTP-binding protein EngB from Campylobacter jejuni (strain RM1221).